We begin with the raw amino-acid sequence, 281 residues long: MSTVINGRELADQMQAEIQKDVEKMTQQGIQPGLVVLLVGENPASQTYVRNKERAAAKIGILSKVEKLPETISEEELLAEIDKYNQDSRFHGILVQLPLPKHIDEEKILLAIDPKKDVDGFHPMNLGRLFVGKPEMIPCTPYGIMKMFEAYDIDLTGKRAVVIGRSNIVGKPMAQLLLMKNATVTIAHSKTEHLAEVAKEADILVVAIGRGHFVTKEFVKPGAVVIDVGMNRNQEGKLIGDVAFDEVSEIASYITPVPKGVGPMTITMLMYQTVEAAKKQK.

Residues glycine 164–serine 166 and serine 189 each bind NADP(+).

This sequence belongs to the tetrahydrofolate dehydrogenase/cyclohydrolase family. As to quaternary structure, homodimer.

It carries out the reaction (6R)-5,10-methylene-5,6,7,8-tetrahydrofolate + NADP(+) = (6R)-5,10-methenyltetrahydrofolate + NADPH. The catalysed reaction is (6R)-5,10-methenyltetrahydrofolate + H2O = (6R)-10-formyltetrahydrofolate + H(+). It participates in one-carbon metabolism; tetrahydrofolate interconversion. Functionally, catalyzes the oxidation of 5,10-methylenetetrahydrofolate to 5,10-methenyltetrahydrofolate and then the hydrolysis of 5,10-methenyltetrahydrofolate to 10-formyltetrahydrofolate. The sequence is that of Bifunctional protein FolD from Enterococcus faecalis (strain ATCC 700802 / V583).